A 689-amino-acid chain; its full sequence is Armadillo-like helical domain-containing protein 3 (689 aa).

The chain crosses the membrane as a helical span at residues 520–538; it reads IFTLALMIVNLFNMFITYG.

This sequence belongs to the ARMH3 family. Interacts with PI4KB. Interacts with GBF1.

The protein resides in the golgi apparatus membrane. Its subcellular location is the cytoplasm. Involved in GBF1 recruitment, Golgi maintenance and protein secretion. The protein is Armadillo-like helical domain-containing protein 3 of Homo sapiens (Human).